The chain runs to 2112 residues: Phenolphthiocerol synthesis polyketide synthase type I Pks15/1 (2112 aa).

The Ketosynthase family 3 (KS3) domain occupies 46–469; it reads TEPVAVVGIG…GTNAHLILEE (424 aa). Residues Cys216, His351, and His391 each act as for beta-ketoacyl synthase activity in the active site. The segment at 579–893 is acyltransferase; sequence TVVVFPGQGA…GQVFTTGVPV (315 aa). Residue Ser670 is the For acyltransferase activity of the active site. Residues 941 to 1063 form an N-terminal hotdog fold region; sequence HALLGAVVER…GMLGVAAAET (123 aa). The interval 941-1101 is dehydratase; the sequence is HALLGAVVER…YAYGPAFQGL (161 aa). Residues 941 to 1215 form the PKS/mFAS DH domain; sequence HALLGAVVER…TRPITAEQLR (275 aa). The active-site Proton acceptor; for dehydratase activity is the His973. The tract at residues 1075 to 1215 is C-terminal hotdog fold; it reads AESVDISDGY…TRPITAEQLR (141 aa). Residue Asp1136 is the Proton donor; for dehydratase activity of the active site. An enoylreductase region spans residues 1406–1711; sequence GTLEDLVIQP…QARHIGKVVL (306 aa). Residues 1536–1553 and 1725–1740 each bind NADP(+); these read VLIHAGTGGVGMAAVQLA and TVVITGATGAVGGVLA. The beta-ketoacyl reductase stretch occupies residues 1724 to 1905; sequence GTVVITGATG…SLAWGLWEQP (182 aa). A Carrier domain is found at 2010-2085; sequence ELLVGLVCLQ…AVAEYVAQQM (76 aa). Ser2045 carries the O-(pantetheine 4'-phosphoryl)serine modification. The span at 2084–2100 shows a compositional bias: polar residues; it reads QMSGSRPTESGDPTSQV. The segment at 2084 to 2112 is disordered; the sequence is QMSGSRPTESGDPTSQVVEPAAAEVSVHA.

The protein belongs to the thiolase-like superfamily. Beta-ketoacyl-ACP synthases family. It depends on pantetheine 4'-phosphate as a cofactor.

It catalyses the reaction a fatty acyl-[ACP] + malonyl-[ACP] + H(+) = a 3-oxoacyl-[ACP] + holo-[ACP] + CO2. It participates in lipid metabolism; fatty acid biosynthesis. Catalyzes the elongation by iterative transfer of p-hydroxybenzoyl group from FadD22 (pHBA-S-FAdD22) to form p-hydroxyphenylalkanoate (pHPA) intermediates during phenolphthiocerol (PPOL) biosynthesis. PPOL is an important intermediate in the biosynthesis of phenolic glycolipid (mycosid B). The polypeptide is Phenolphthiocerol synthesis polyketide synthase type I Pks15/1 (pks15/1) (Mycobacterium bovis (strain ATCC BAA-935 / AF2122/97)).